The following is a 294-amino-acid chain: Beta-lactamase (294 aa).

A signal peptide spans 1 to 27; that stretch reads MFKKRGRQTVLIAAVLAFFTASSPLLA. Catalysis depends on Ser76, which acts as the Acyl-ester intermediate. Residue Glu174 is the Proton acceptor of the active site. A substrate-binding site is contributed by 240–242; the sequence is KTG.

This sequence belongs to the class-A beta-lactamase family.

It catalyses the reaction a beta-lactam + H2O = a substituted beta-amino acid. The protein is Beta-lactamase of Citrobacter koseri (Citrobacter diversus).